Reading from the N-terminus, the 4334-residue chain is Cytoplasmic dynein 2 heavy chain 1 (4334 aa).

A stem region spans residues 1–1704; sequence MSSDSRKTFV…KVAMAEATFD (1704 aa). 150–157 contributes to the ATP binding site; it reads LGTAVRKG. Residues 1026 to 1097 are a coiled coil; that stretch reads QEAKGLTAKL…AHLEEQKGNL (72 aa). AAA regions lie at residues 1705-1929, 1996-2211, 2299-2544, and 2641-2882; these read YTWE…VLGI, KALA…KAFQ, GMDE…WING, and GYER…SSGS. ATP is bound by residues 1743-1750, 2034-2041, 2334-2341, and 2679-2686; these read GPAGTGKT, GPSGSGKS, GPEGCGKG, and GNSGVGRR. Positions 2897–3185 are stalk; it reads QIYNRKRTQV…ISVDKAESVL (289 aa). Coiled coils occupy residues 2930–2998 and 3120–3199; these read LSAE…SEVQ and ERVS…RGEK. AAA regions lie at residues 3260-3492 and 3701-3917; these read LSSE…TVEK and MSSF…VITL.

The protein belongs to the dynein heavy chain family. As to quaternary structure, the cytoplasmic dynein complex 2 is probably composed by a DHC1B homodimer and a number of D1BLIC light intermediate chains. Interacts with FAP133, FLA10 and LC8.

It localises to the cytoplasm. It is found in the cytoskeleton. Its subcellular location is the flagellum basal body. The protein resides in the cell projection. The protein localises to the cilium. It localises to the flagellum membrane. Its function is as follows. May function as a motor for intraflagellar retrograde transport. Functions in flagellar biogenesis. The sequence is that of Cytoplasmic dynein 2 heavy chain 1 (DHC1B) from Chlamydomonas reinhardtii (Chlamydomonas smithii).